The chain runs to 604 residues: MTDVPVSRLRNFCIIAHIDHGKSTLADRLLQDTGTVAGRDMQEQFLDNMDLERERGITIKLQAARMNYTAADGESYVLNLIDTPGHVDFSYEVSRSLQACEGALLVVDASQGVEAQTLANVYLALENDLEIIPVLNKIDLPGSDPERIKEEIEAIIGLDTSTAIACSAKTGLGVPEIMQAVVDRIPPPADTIDKPTKALIFDSYYDSYRGVIVYFRVISGRISTKDKVLLMASKKSYELDEIGVMSPDQCEVNELHAGEVGYLAASIKAVADARVGDTITLLNAPADEPLPGYTEAKPMVFCGLFPTDSDQYPDLREALDKLQLSDAALKYEPETSSAMGFGFRCGFLGLLHMEIVQERLEREYDLDLIVTAPSVIYKVNMIDGQMLMVDNPATLPDPQRRESIEEPYVRMEIYAPNEYNGTLMGLCQERRGEYIDMKYITTERVTLIYELPLAEVVTDFFDQMKSRTKGYASMEYHLIGYRRNDLVRLDVLINAEKADPLTTIAHRDKAYSIGKGLVEKLKELIPRQQFKIPLQASIGSRIIASESISAMRKDVLAKCYGGDISRKKKLLKKQAKGKKRMKAMGKVDVPQEAFMAVLKLNQTS.

Positions 7 to 189 constitute a tr-type G domain; the sequence is SRLRNFCIIA…AVVDRIPPPA (183 aa). Residues 19–24 and 136–139 each bind GTP; these read DHGKST and NKID.

Belongs to the TRAFAC class translation factor GTPase superfamily. Classic translation factor GTPase family. LepA subfamily.

It is found in the cell inner membrane. It carries out the reaction GTP + H2O = GDP + phosphate + H(+). Functionally, required for accurate and efficient protein synthesis under certain stress conditions. May act as a fidelity factor of the translation reaction, by catalyzing a one-codon backward translocation of tRNAs on improperly translocated ribosomes. Back-translocation proceeds from a post-translocation (POST) complex to a pre-translocation (PRE) complex, thus giving elongation factor G a second chance to translocate the tRNAs correctly. Binds to ribosomes in a GTP-dependent manner. This Prochlorococcus marinus (strain MIT 9313) protein is Elongation factor 4.